A 510-amino-acid polypeptide reads, in one-letter code: Guanosine import ATP-binding protein NupO (510 aa).

2 ABC transporter domains span residues 5–240 (IEML…VGRE) and 257–501 (LAID…AGST). 37 to 44 (GENGAGKS) serves as a coordination point for ATP.

The protein belongs to the ABC transporter superfamily. In terms of assembly, the complex is composed of two ATP-binding proteins (NupO), two transmembrane proteins (NupP and NupQ) and a solute-binding protein (NupN).

It localises to the cell membrane. Its function is as follows. Part of an ABC transporter complex involved in the uptake of guanosine. Responsible for energy coupling to the transport system. May be a nucleoside transporter of broad specificity but with various affinities for different substrates. The chain is Guanosine import ATP-binding protein NupO from Bacillus subtilis (strain 168).